Consider the following 584-residue polypeptide: MALLHSTLIWIVYAIVVGILSIVASTFVYIYQTPRDRSAAVTTVCIFTLTALLATVLLLPVDVALVSSTTSEFGRRKDWATDHEVEKITYSLTVVYYFLYSLDAVLCLLIVPFTYFWYEEYDEVAYEDDGRFTRKPFWGAFKYTLVFILLTIILFLVGFFVPVAKDRKGAHFDLDYFKRLLTENHGERALTFALGLLIVMGIIVYVIYSSTGLAFFPISFIKSSPSISSPMLSANIESRLEENIERQRQLEGRCGGNPDHLSSKDRRELDSLVREERTLRRRKRLAEASRGQGRNFVIKVWYKLGAVFRPIKLLGGLLLLAISVMIWISMLLTCIDKAKNSVCKQKCGYILGKINIINPVNWVLVEAASVFPADYVIFIVLVLHLFTSSVVGIATIGIRFLWIRLLQIRKGHTSPQALLLATVMLTLITLALNYSISMIVVPQYATYGPQTFCDYPSIPASAPLDCSKHKEYLKPCSELANNPAAKAVCTPSVASTFLNRITLNFPFFGIVDFWAQFVFLGFSLIVLLISLFRTPRFDEQQMDEDAEEAEEEGLLAASGSRFNAAWQDTTGRTRDQRVRFRDDE.

10 consecutive transmembrane segments (helical) span residues 8–28 (LIWIVYAIVVGILSIVASTFV), 46–66 (IFTLTALLATVLLLPVDVALV), 93–113 (TVVYYFLYSLDAVLCLLIVPF), 144–164 (TLVFILLTIILFLVGFFVPVA), 189–209 (ALTFALGLLIVMGIIVYVIYS), 313–333 (LLGGLLLLAISVMIWISMLLT), 350–370 (ILGKINIINPVNWVLVEAASV), 376–396 (VIFIVLVLHLFTSSVVGIATI), 421–441 (ATVMLTLITLALNYSISMIVV), and 509–529 (GIVDFWAQFVFLGFSLIVLLI).

This sequence belongs to the LIMR family. LMBRD1 subfamily.

It is found in the lysosome membrane. Its function is as follows. Probable lysosomal cobalamin transporter. Required to export cobalamin from lysosomes allowing its conversion to cofactors. The sequence is that of Probable lysosomal cobalamin transporter from Coccidioides immitis (strain RS) (Valley fever fungus).